Here is a 114-residue protein sequence, read N- to C-terminus: uncharacterized protein (114 aa).

The next 2 helical transmembrane spans lie at 58–78 (CLLG…FFLL) and 94–114 (SISY…FCLA).

The protein resides in the membrane. This is an uncharacterized protein from Saccharomyces cerevisiae (strain ATCC 204508 / S288c) (Baker's yeast).